We begin with the raw amino-acid sequence, 1272 residues long: uncharacterized protein (1272 aa).

This is an uncharacterized protein from Methanocaldococcus jannaschii (strain ATCC 43067 / DSM 2661 / JAL-1 / JCM 10045 / NBRC 100440) (Methanococcus jannaschii).